A 212-amino-acid polypeptide reads, in one-letter code: Protein GrpE (212 aa).

The tract at residues 1 to 68 (MAETSNNKTS…ELESAKKEIE (68 aa)) is disordered. A compositionally biased stretch (basic and acidic residues) spans 9–30 (TSEEAKANEKKSQSETLEESKL). Residues 40 to 60 (ETTQTESMETAETETSLQTEL) are compositionally biased toward low complexity.

Belongs to the GrpE family. As to quaternary structure, homodimer.

The protein localises to the cytoplasm. Participates actively in the response to hyperosmotic and heat shock by preventing the aggregation of stress-denatured proteins, in association with DnaK and GrpE. It is the nucleotide exchange factor for DnaK and may function as a thermosensor. Unfolded proteins bind initially to DnaJ; upon interaction with the DnaJ-bound protein, DnaK hydrolyzes its bound ATP, resulting in the formation of a stable complex. GrpE releases ADP from DnaK; ATP binding to DnaK triggers the release of the substrate protein, thus completing the reaction cycle. Several rounds of ATP-dependent interactions between DnaJ, DnaK and GrpE are required for fully efficient folding. The sequence is that of Protein GrpE from Leptospira interrogans serogroup Icterohaemorrhagiae serovar copenhageni (strain Fiocruz L1-130).